The following is a 245-amino-acid chain: tRNA pseudouridine synthase A (245 aa).

The active-site Nucleophile is Asp-52. Residue Tyr-111 participates in substrate binding.

It belongs to the tRNA pseudouridine synthase TruA family. As to quaternary structure, homodimer.

It carries out the reaction uridine(38/39/40) in tRNA = pseudouridine(38/39/40) in tRNA. Its function is as follows. Formation of pseudouridine at positions 38, 39 and 40 in the anticodon stem and loop of transfer RNAs. In Bradyrhizobium diazoefficiens (strain JCM 10833 / BCRC 13528 / IAM 13628 / NBRC 14792 / USDA 110), this protein is tRNA pseudouridine synthase A.